Reading from the N-terminus, the 340-residue chain is Cathepsin S (340 aa).

Residues M1–L17 form the signal peptide. Residues V18–T122 constitute a propeptide, activation peptide. A glycan (N-linked (GlcNAc...) asparagine) is linked at N120. 4 disulfides stabilise this stretch: C134-C233, C144-C189, C178-C222, and C281-C329. C147 is an active-site residue. Catalysis depends on residues H287 and N307.

The protein belongs to the peptidase C1 family. Widely expressed with highest expression found in non-skeletal tissues. Relatively high levels found in skeletal tissues. Expressed in spleen, B cells, dendritic cells and macrophages.

Its subcellular location is the lysosome. The protein localises to the secreted. It localises to the cytoplasmic vesicle. It is found in the phagosome. It catalyses the reaction Similar to cathepsin L, but with much less activity on Z-Phe-Arg-|-NHMec, and more activity on the Z-Val-Val-Arg-|-Xaa compound.. In terms of biological role, thiol protease. Key protease responsible for the removal of the invariant chain from MHC class II molecules and MHC class II antigen presentation. The bond-specificity of this proteinase is in part similar to the specificities of cathepsin L. This Mus musculus (Mouse) protein is Cathepsin S (Ctss).